A 173-amino-acid polypeptide reads, in one-letter code: MDAAKVRSEFDEKMMRYALELADKAEALGEIPVGAVLVDDARNIIGEGWNLSIVQSDPTAHAEIIALRNGAKNIQNYRLLNSTLYVTLEPCTMCAGAILHSRIKRLVFGASDYKTGAIGSRFHFFDDYKMNHTLEVTSGVLAEECSQKLSTFFQKRREEKKIEKALLKSLSDK.

The 113-residue stretch at 9–121 (EFDEKMMRYA…DYKTGAIGSR (113 aa)) folds into the CMP/dCMP-type deaminase domain. H61 lines the Zn(2+) pocket. E63 acts as the Proton donor in catalysis. Zn(2+) contacts are provided by C91 and C94.

Belongs to the cytidine and deoxycytidylate deaminase family. Homodimer. It depends on Zn(2+) as a cofactor.

It catalyses the reaction adenosine(34) in tRNA + H2O + H(+) = inosine(34) in tRNA + NH4(+). Its function is as follows. Catalyzes the deamination of adenosine to inosine at the wobble position 34 of tRNA(Arg2). The sequence is that of tRNA-specific adenosine deaminase from Haemophilus influenzae (strain ATCC 51907 / DSM 11121 / KW20 / Rd).